The sequence spans 294 residues: Putative deoxyribonuclease TATDN3 (294 aa).

Positions 9, 11, 104, 144, 167, and 215 each coordinate Zn(2+).

It belongs to the metallo-dependent hydrolases superfamily. TatD-type hydrolase family. It depends on Mn(2+) as a cofactor. Ca(2+) is required as a cofactor. Requires Mg(2+) as cofactor. Zn(2+) serves as cofactor.

It localises to the nucleus. Its activity is regulated as follows. The 3'-exonuclease activity is sensitive to the metal ion present in the active site, whereas the AP endodeoxyribonuclease activity is observed in a variety of divalent metal cofactors. 3'-exoxonuclease activity is suppressed in the presence of Ca(2+), Zn(2+) and Ni(2+). Functionally, exhibits 3'-exonuclease activities and apurinic/apyrimidinic (AP) endonuclease (in vitro). Show preferential AP endonuclease activity on double-stranded DNA substrates and 3'- exonuclease activity on single-stranded DNA. The protein is Putative deoxyribonuclease TATDN3 (Tatdn3) of Mus musculus (Mouse).